The following is a 327-amino-acid chain: MIDDIKNVSVVIPVYNEEESLPVLIERTLAACRKIGKPWEIILVDDGSNDRSAELLTEAASDPEKHIIAVLLNRNYGQHSAIMAGFQQAVGDVVITLDADLQNPPEEIPRLVEYASQGYDVVGTVRANRQDSLFRKLASKTINMMIRRSTGKSMADYGCMLRAYRRHIVSAMLRCHERSTFIPILANTFARKTIEIDVLHAEREFGTSKYSFLKLINLMYDLLTCLTTTPLRILSLIGSVVALSGFLLALLLIGLRLFFGAEWAAEGVFTLFAVLFMFIGAQFVGMGLLGEYIGRIYTDVRARPRYFVQKTVSAATPLTTSLRDEEE.

A run of 2 helical transmembrane segments spans residues 233 to 253 (ILSL…LLLI) and 268 to 288 (VFTL…GMGL).

It belongs to the glycosyltransferase 2 family.

The protein resides in the cell inner membrane. The catalysed reaction is UDP-4-deoxy-4-formamido-beta-L-arabinose + di-trans,octa-cis-undecaprenyl phosphate = 4-deoxy-4-formamido-alpha-L-arabinopyranosyl di-trans,octa-cis-undecaprenyl phosphate + UDP. The protein operates within glycolipid biosynthesis; 4-amino-4-deoxy-alpha-L-arabinose undecaprenyl phosphate biosynthesis; 4-amino-4-deoxy-alpha-L-arabinose undecaprenyl phosphate from UDP-4-deoxy-4-formamido-beta-L-arabinose and undecaprenyl phosphate: step 1/2. It functions in the pathway bacterial outer membrane biogenesis; lipopolysaccharide biosynthesis. Functionally, catalyzes the transfer of 4-deoxy-4-formamido-L-arabinose from UDP to undecaprenyl phosphate. The modified arabinose is attached to lipid A and is required for resistance to polymyxin and cationic antimicrobial peptides. This chain is Undecaprenyl-phosphate 4-deoxy-4-formamido-L-arabinose transferase, found in Pectobacterium atrosepticum (strain SCRI 1043 / ATCC BAA-672) (Erwinia carotovora subsp. atroseptica).